The primary structure comprises 565 residues: CTP synthase (565 aa).

An amidoligase domain region spans residues 1–272; sequence MARPKNVKHI…DKRVLKKLGI (272 aa). Serine 18 is a binding site for CTP. Serine 18 is a UTP binding site. Residue 19-24 coordinates ATP; the sequence is SLGKGI. Tyrosine 59 contacts L-glutamine. An ATP-binding site is contributed by aspartate 76. Positions 76 and 146 each coordinate Mg(2+). CTP is bound by residues 153–155, 193–198, and lysine 229; these read DIE and KTKPTQ. Residues 193-198 and lysine 229 each bind UTP; that span reads KTKPTQ. The 245-residue stretch at 299–543 folds into the Glutamine amidotransferase type-1 domain; sequence TIAVCGKYTE…VAAAKAFAFG (245 aa). Glycine 363 is an L-glutamine binding site. Cysteine 390 functions as the Nucleophile; for glutamine hydrolysis in the catalytic mechanism. L-glutamine is bound by residues 391–394, glutamate 414, and arginine 471; that span reads LGMQ. Residues histidine 516 and glutamate 518 contribute to the active site.

Belongs to the CTP synthase family. Homotetramer.

The enzyme catalyses UTP + L-glutamine + ATP + H2O = CTP + L-glutamate + ADP + phosphate + 2 H(+). It carries out the reaction L-glutamine + H2O = L-glutamate + NH4(+). It catalyses the reaction UTP + NH4(+) + ATP = CTP + ADP + phosphate + 2 H(+). Its pathway is pyrimidine metabolism; CTP biosynthesis via de novo pathway; CTP from UDP: step 2/2. Its activity is regulated as follows. Allosterically activated by GTP, when glutamine is the substrate; GTP has no effect on the reaction when ammonia is the substrate. The allosteric effector GTP functions by stabilizing the protein conformation that binds the tetrahedral intermediate(s) formed during glutamine hydrolysis. Inhibited by the product CTP, via allosteric rather than competitive inhibition. In terms of biological role, catalyzes the ATP-dependent amination of UTP to CTP with either L-glutamine or ammonia as the source of nitrogen. Regulates intracellular CTP levels through interactions with the four ribonucleotide triphosphates. The polypeptide is CTP synthase (Chlorobium phaeobacteroides (strain BS1)).